Reading from the N-terminus, the 458-residue chain is Putative long chain fatty acid-CoA ligase VraA (458 aa).

It belongs to the ATP-dependent AMP-binding enzyme family.

This is Putative long chain fatty acid-CoA ligase VraA (vraA) from Staphylococcus aureus (strain MRSA252).